Reading from the N-terminus, the 200-residue chain is Putative vacuolar protein sorting-associated protein 24 homolog 2 (200 aa).

The stretch at 2–23 (TIKSLLSDIEREERNVHKAIKD) forms a coiled coil.

This sequence belongs to the SNF7 family. As to quaternary structure, component of the endosomal sorting required for transport complex III (ESCRT-III), composed at least of VPS2, VPS20, VPS24 and VPS32.

It is found in the endosome. Functionally, component of the ESCRT-III complex, which is required for multivesicular bodies (MVBs) formation and sorting of endosomal cargo proteins into MVBs. The ESCRT-III complex is probably involved in the concentration of MVB cargo. This chain is Putative vacuolar protein sorting-associated protein 24 homolog 2 (VPS24-2), found in Arabidopsis thaliana (Mouse-ear cress).